We begin with the raw amino-acid sequence, 669 residues long: Probable serine/threonine-protein kinase DDB_G0291918 (669 aa).

Residues 13 to 360 (YNNIKELGRG…LKETLNHPFL (348 aa)) enclose the Protein kinase domain. ATP-binding positions include 19–27 (LGRGVSGVV) and Lys42. Catalysis depends on Asp141, which acts as the Proton acceptor. The span at 396-405 (QNQQQQQQQQ) shows a compositional bias: low complexity. 2 disordered regions span residues 396-518 (QNQQ…APTF) and 530-550 (FPKL…MNWR). Residues 406–418 (KSFSTSSLPQVNH) are compositionally biased toward polar residues. Composition is skewed to low complexity over residues 419–449 (NNDT…NNNN) and 457–494 (QSNN…SSTD).

It belongs to the protein kinase superfamily. Ser/Thr protein kinase family.

It catalyses the reaction L-seryl-[protein] + ATP = O-phospho-L-seryl-[protein] + ADP + H(+). It carries out the reaction L-threonyl-[protein] + ATP = O-phospho-L-threonyl-[protein] + ADP + H(+). This Dictyostelium discoideum (Social amoeba) protein is Probable serine/threonine-protein kinase DDB_G0291918.